Reading from the N-terminus, the 682-residue chain is DNA-directed RNA polymerase subunit beta' (682 aa).

Zn(2+) contacts are provided by Cys69, Cys71, Cys87, and Cys90. Mg(2+) contacts are provided by Asp489, Asp491, and Asp493.

The protein belongs to the RNA polymerase beta' chain family. RpoC1 subfamily. In terms of assembly, in plastids the minimal PEP RNA polymerase catalytic core is composed of four subunits: alpha, beta, beta', and beta''. When a (nuclear-encoded) sigma factor is associated with the core the holoenzyme is formed, which can initiate transcription. Requires Mg(2+) as cofactor. The cofactor is Zn(2+).

Its subcellular location is the plastid. It localises to the chloroplast. The enzyme catalyses RNA(n) + a ribonucleoside 5'-triphosphate = RNA(n+1) + diphosphate. Functionally, DNA-dependent RNA polymerase catalyzes the transcription of DNA into RNA using the four ribonucleoside triphosphates as substrates. The polypeptide is DNA-directed RNA polymerase subunit beta' (Acorus gramineus (Dwarf sweet flag)).